Consider the following 74-residue polypeptide: Bacteriocin hiracin-JM79 (74 aa).

A signal peptide spans methionine 1–alanine 30.

It is found in the secreted. In terms of biological role, bacteriocin with antibacterial activity against the Gram-positive Listeria, Enterococcus, Propionibacterium, Staphylococcus and some strains of Clostridium, Lactobacillus and Pediococcus. Lacks antibacterial activity against Gram-negative bacteria. The polypeptide is Bacteriocin hiracin-JM79 (Enterococcus hirae).